Consider the following 312-residue polypeptide: Malate dehydrogenase (312 aa).

Residues 7–13 (GAAGGIG) and aspartate 34 each bind NAD(+). 2 residues coordinate substrate: arginine 81 and arginine 87. Residues asparagine 94 and 117-119 (ITN) each bind NAD(+). Positions 119 and 153 each coordinate substrate. The active-site Proton acceptor is histidine 177. Residue methionine 227 participates in NAD(+) binding.

This sequence belongs to the LDH/MDH superfamily. MDH type 1 family. In terms of assembly, homodimer.

It catalyses the reaction (S)-malate + NAD(+) = oxaloacetate + NADH + H(+). Its function is as follows. Catalyzes the reversible oxidation of malate to oxaloacetate. In Moritella marina (Vibrio marinus), this protein is Malate dehydrogenase.